A 342-amino-acid chain; its full sequence is Ribosomal RNA small subunit methyltransferase C (342 aa).

Belongs to the methyltransferase superfamily. RsmC family. As to quaternary structure, monomer.

It is found in the cytoplasm. It carries out the reaction guanosine(1207) in 16S rRNA + S-adenosyl-L-methionine = N(2)-methylguanosine(1207) in 16S rRNA + S-adenosyl-L-homocysteine + H(+). Specifically methylates the guanine in position 1207 of 16S rRNA in the 30S particle. The protein is Ribosomal RNA small subunit methyltransferase C of Cronobacter sakazakii (strain ATCC BAA-894) (Enterobacter sakazakii).